The following is a 229-amino-acid chain: Ribonuclease HII (229 aa).

One can recognise an RNase H type-2 domain in the interval 34–225 (GPVAGVDEAG…VKAAHDQWLQ (192 aa)). Positions 40, 41, and 134 each coordinate a divalent metal cation.

The protein belongs to the RNase HII family. It depends on Mn(2+) as a cofactor. Requires Mg(2+) as cofactor.

It localises to the cytoplasm. It catalyses the reaction Endonucleolytic cleavage to 5'-phosphomonoester.. Endonuclease that specifically degrades the RNA of RNA-DNA hybrids. This Corynebacterium diphtheriae (strain ATCC 700971 / NCTC 13129 / Biotype gravis) protein is Ribonuclease HII.